We begin with the raw amino-acid sequence, 498 residues long: MSTHKAALCKVQILKLFLISARCVRITRFYGVCGLSTSTPASSPKVCIVGGGPAGFYTAQHLVKTRTDVQVDIYERLPVPFGLVRFGVAPDHPEVKNVINTFTQTARHARCSFHGNVRVGKDVTVEELQEAYHAVVLSYGAEGNRTMGVPGEDLAGVYSAKDFVGWYNGLPRNRELRPDLSCETAVILGQGNVALDVARMLLSPVDILKKTDITQHALDALAESSVRRVLIVGRRGPLQVACTIKELREMVNLPGTRPEMEASEFEGIAETLKSLARPRKRLTELLLKAAIETPGEEELEKRNKAERAWGFRFLRRPLEVLPSTDLIRAAGIRLAVNRLEGDGEGVRAVATGEVEDVECGLVISSIGYKSLPIDPAVPFDGRKAIIPNTMGRVQQTAGLYCSGWVKRGPTGVIATTMNDSFDTARTLLQDIGKGTLDVSSVKPGSQGVSALLEKRGVKPVSFSDWEKIDSEETRRGETRGKPREKMLDVGEMLQVARA.

The transit peptide at 1–37 directs the protein to the mitochondrion; the sequence is MSTHKAALCKVQILKLFLISARCVRITRFYGVCGLST. FAD-binding residues include Ala54, Glu75, Leu83, and Val119. NADP(+)-binding positions include 190 to 193, 234 to 235, and Glu246; these read QGNV and RR. FAD is bound by residues Trp404 and 411–413; that span reads GVI. Gly411 lines the NADP(+) pocket. Residues 469–488 show a composition bias toward basic and acidic residues; sequence DSEETRRGETRGKPREKMLD. The disordered stretch occupies residues 469–489; the sequence is DSEETRRGETRGKPREKMLDV.

It belongs to the ferredoxin--NADP reductase type 1 family. The cofactor is FAD.

The protein resides in the mitochondrion inner membrane. The enzyme catalyses 2 reduced [adrenodoxin] + NADP(+) + H(+) = 2 oxidized [adrenodoxin] + NADPH. It participates in steroid metabolism; cholesterol metabolism. Serves as the first electron transfer protein in all the mitochondrial P450 systems including cholesterol side chain cleavage in all steroidogenic tissues, steroid 11-beta hydroxylation in the adrenal cortex, 25-OH-vitamin D3-24 hydroxylation in the kidney, and sterol C-27 hydroxylation in the liver. This is NADPH:adrenodoxin oxidoreductase, mitochondrial (fdxr) from Salvelinus fontinalis (Brook trout).